The sequence spans 187 residues: Elongation factor P (187 aa).

Belongs to the elongation factor P family.

It localises to the cytoplasm. Its pathway is protein biosynthesis; polypeptide chain elongation. Involved in peptide bond synthesis. Stimulates efficient translation and peptide-bond synthesis on native or reconstituted 70S ribosomes in vitro. Probably functions indirectly by altering the affinity of the ribosome for aminoacyl-tRNA, thus increasing their reactivity as acceptors for peptidyl transferase. This is Elongation factor P from Helicobacter acinonychis (strain Sheeba).